Reading from the N-terminus, the 462-residue chain is MSHSGLTRTAAAPPSLSRHAVDTARLAAPLAIAQLSQMAMSVTDTVLLGSLGPDSLAAGGLGANFFFVIVTVLQGVLSSVSVSVAHARGAQAEHRVPHIYWTGFVLSVLLAIPAVVALSLSEPLLLMFHEPPTLAQHVGEYTGILRFAALGSLIGVGLMRAFLPAIGAARRLLWVSIGGIGVNAVLNYGLIHGAYGLPRLGFLGSAVATTITIWLTAFALIWLLHGRARFRHFVSAARPKLPMMGELIGIGWPVAITYGVESTLFLATGLTVGVLGATALAAHQIALNVASVAFMVPLAIGQAANVRVGYWIGAGDPVAARHAGFVALGLGVAFMSLSGLVLILAPHAIVGLYLHLDDPANAATVSLAASLLGIAAVFQIVDGMQTVGSGALRGLRDTRIPMLAATFGYWGIGFPTGYWLAFHAGLGARGLWWGLAAGLASVAVLMAWRFHLKTSSLIAAPR.

A run of 11 helical transmembrane segments spans residues 56–76 (LAAG…LQGV), 99–119 (IYWT…VALS), 147–167 (FAAL…PAIG), 172–192 (LLWV…GLIH), 202–222 (FLGS…ALIW), 247–267 (LIGI…LFLA), 280–300 (LAAH…PLAI), 325–345 (FVAL…LILA), 361–381 (NAAT…FQIV), 402–422 (MLAA…WLAF), and 430–450 (GLWW…AWRF).

The protein belongs to the multi antimicrobial extrusion (MATE) (TC 2.A.66.1) family.

It localises to the cell inner membrane. Its function is as follows. Multidrug efflux pump. Confers probably resistance to the cationic peptide polymyxin B (PMB). This chain is Multidrug resistance protein NorM (norM), found in Burkholderia vietnamiensis.